The primary structure comprises 241 residues: Outer membrane protein assembly factor BamD (241 aa).

The N-terminal stretch at M1–G17 is a signal peptide. C18 carries the N-palmitoyl cysteine lipid modification. A lipid anchor (S-diacylglycerol cysteine) is attached at C18.

It belongs to the BamD family. Part of the Bam complex.

The protein localises to the cell outer membrane. In terms of biological role, part of the outer membrane protein assembly complex, which is involved in assembly and insertion of beta-barrel proteins into the outer membrane. This chain is Outer membrane protein assembly factor BamD, found in Vibrio cholerae serotype O1 (strain ATCC 39315 / El Tor Inaba N16961).